The following is a 188-amino-acid chain: Achaete-scute homolog 5 (188 aa).

The segment at 80-93 (AFIQKRNERERQRV) is basic motif. The region spanning 80 to 132 (AFIQKRNERERQRVKCVNEGYARLRGHLPGALTEKRLSKVETLRAAIRYIKYL) is the bHLH domain. Residues 94-132 (KCVNEGYARLRGHLPGALTEKRLSKVETLRAAIRYIKYL) are helix-loop-helix motif. Residues 139–188 (TPDGAPPPATSPPPAHTGHSNVPQPSSLVAESSGSPFSSSPFLESEEPSL) form a disordered region. The segment covering 142 to 153 (GAPPPATSPPPA) has biased composition (pro residues). A compositionally biased stretch (polar residues) spans 158-168 (SNVPQPSSLVA). Residues 169–181 (ESSGSPFSSSPFL) are compositionally biased toward low complexity.

Interacts with transcription factor TCF3/E12. Expressed in teeth (at protein level).

It localises to the nucleus. Functionally, transcription factor. Probably binds E-box motifs 5'-CANNTG-3' in complex with transcription factor TCF3/E12. Negatively modulates transcription of target genes such as CDH1/E-cadherin, perhaps by recruiting the PRC2 repressive complex to regulatory elements. Regulates ameloblast development and tooth germ growth, perhaps acting by positively modulating migration of inner enamel epithelium (IEE) cells. Plays a role in enamel formation. This Mus musculus (Mouse) protein is Achaete-scute homolog 5.